Here is a 130-residue protein sequence, read N- to C-terminus: Small ribosomal subunit protein uS11 (130 aa).

It belongs to the universal ribosomal protein uS11 family. Part of the 30S ribosomal subunit. Interacts with proteins S7 and S18. Binds to IF-3.

Functionally, located on the platform of the 30S subunit, it bridges several disparate RNA helices of the 16S rRNA. Forms part of the Shine-Dalgarno cleft in the 70S ribosome. The polypeptide is Small ribosomal subunit protein uS11 (Caldanaerobacter subterraneus subsp. tengcongensis (strain DSM 15242 / JCM 11007 / NBRC 100824 / MB4) (Thermoanaerobacter tengcongensis)).